The sequence spans 220 residues: Thiamine-phosphate synthase (220 aa).

4-amino-2-methyl-5-(diphosphooxymethyl)pyrimidine-binding positions include 46–50 and Asn-83; that span reads QFREK. Mg(2+) is bound by residues Asp-84 and Asp-103. 4-amino-2-methyl-5-(diphosphooxymethyl)pyrimidine is bound at residue Ser-122. Residue 149–151 participates in 2-[(2R,5Z)-2-carboxy-4-methylthiazol-5(2H)-ylidene]ethyl phosphate binding; the sequence is TNS. Lys-152 is a 4-amino-2-methyl-5-(diphosphooxymethyl)pyrimidine binding site. 2-[(2R,5Z)-2-carboxy-4-methylthiazol-5(2H)-ylidene]ethyl phosphate contacts are provided by residues Gly-181 and 201–202; that span reads IS.

Belongs to the thiamine-phosphate synthase family. Mg(2+) is required as a cofactor.

The enzyme catalyses 2-[(2R,5Z)-2-carboxy-4-methylthiazol-5(2H)-ylidene]ethyl phosphate + 4-amino-2-methyl-5-(diphosphooxymethyl)pyrimidine + 2 H(+) = thiamine phosphate + CO2 + diphosphate. It catalyses the reaction 2-(2-carboxy-4-methylthiazol-5-yl)ethyl phosphate + 4-amino-2-methyl-5-(diphosphooxymethyl)pyrimidine + 2 H(+) = thiamine phosphate + CO2 + diphosphate. The catalysed reaction is 4-methyl-5-(2-phosphooxyethyl)-thiazole + 4-amino-2-methyl-5-(diphosphooxymethyl)pyrimidine + H(+) = thiamine phosphate + diphosphate. It participates in cofactor biosynthesis; thiamine diphosphate biosynthesis; thiamine phosphate from 4-amino-2-methyl-5-diphosphomethylpyrimidine and 4-methyl-5-(2-phosphoethyl)-thiazole: step 1/1. Functionally, condenses 4-methyl-5-(beta-hydroxyethyl)thiazole monophosphate (THZ-P) and 2-methyl-4-amino-5-hydroxymethyl pyrimidine pyrophosphate (HMP-PP) to form thiamine monophosphate (TMP). In Mannheimia succiniciproducens (strain KCTC 0769BP / MBEL55E), this protein is Thiamine-phosphate synthase.